Consider the following 521-residue polypeptide: Medium/long-chain-fatty-acid--[acyl-carrier-protein] ligase MbtM (521 aa).

The protein belongs to the ATP-dependent AMP-binding enzyme family.

The catalysed reaction is a long-chain fatty acid + holo-[ACP] + ATP = a long-chain fatty acyl-[ACP] + AMP + diphosphate. It carries out the reaction a medium-chain fatty acid + holo-[ACP] + ATP = a medium-chain fatty acyl-[ACP] + AMP + diphosphate. Its pathway is siderophore biosynthesis; mycobactin biosynthesis. Activates lipidic moieties required for mycobactin biosynthesis. Converts medium- to long-chain aliphatic fatty acids into acyl adenylate, which is further transferred on to the phosphopantetheine arm of the carrier protein MbtL. The protein is Medium/long-chain-fatty-acid--[acyl-carrier-protein] ligase MbtM (mbtM) of Mycobacterium sp. (strain MCS).